The following is a 7081-amino-acid chain: Leucine-rich repeat transmembrane protein CCDC168 (7081 aa).

The chain crosses the membrane as a helical span at residues 37-57; sequence WVAIFFIILLGIIFEIILMKA. LRR repeat units lie at residues 233–256 and 420–445; these read PCPLAHLFLSRDQVRLLEENVRNQ and NAEFLVLTLNPNLVTEDMPQLRSVKA. The interval 717-745 is disordered; it reads EDLQSSENSHLQLSNGEELPTSTPKTQRC. Over residues 718–742 the composition is skewed to polar residues; that stretch reads DLQSSENSHLQLSNGEELPTSTPKT. The LRR 3 repeat unit spans residues 865–890; the sequence is ADTLRIIRLSHSASKQEKLPDEKETQ. A disordered region spans residues 943–1009; that stretch reads QISSGSSKAP…DPKNPLTMPE (67 aa). Over residues 958–970 the composition is skewed to polar residues; it reads VQPQTLSTQTILE. Residues 981–999 show a composition bias toward basic and acidic residues; it reads QVEKVKQSTDRPTDRESAG. The stretch at 1050-1075 is one LRR 4 repeat; sequence LPAVALGSFNNHLLTLPYFKRQEIKK. 2 stretches are compositionally biased toward polar residues: residues 1274 to 1286 and 1295 to 1304; these read KCTADSETPSPIS and LNQTRESYIP. The interval 1274 to 1304 is disordered; that stretch reads KCTADSETPSPISGKSLIGDPLNQTRESYIP. An LRR 5 repeat occupies 1501 to 1527; it reads NCLTLELHINGQRLQHQTGFEQTTLET. Composition is skewed to basic and acidic residues over residues 1773–1784 and 1793–1804; these read ETEKDTLREKRL and TSPHEDSITSRD. 4 disordered regions span residues 1773 to 1804, 1954 to 1973, 2008 to 2031, and 2083 to 2103; these read ETEKDTLREKRLSSTQVKQDTSPHEDSITSRD, KSPHGGEAQKANLTDMESGS, STHQMKDPDPCKSGSEPKSPEGRS, and TGKSKIGSIPRDTPWDENPRR. Residues 1964-1973 show a composition bias toward polar residues; the sequence is ANLTDMESGS. The stretch at 2373–2397 is one LRR 6 repeat; it reads KNQINTIQLSERKIILNPKCLTMKE. The interval 2637-2680 is disordered; that stretch reads GRHSPASEEMKRQNGRLKMADRSSPQGRPLQAKQSAVSQSPDTA. Over residues 2668 to 2678 the composition is skewed to polar residues; the sequence is AKQSAVSQSPD. LRR repeat units lie at residues 2727 to 2749, 2832 to 2855, 2862 to 2889, 3433 to 3458, and 3630 to 3653; these read SKIHPLQIENKKEFKTADWKTRA, IQQQKSFQLSKNAVHRVLKAVYDS, IKKLTEVKMEKDKPKDRTCILPQPKLEK, LSSRTPGLDLFSADQLSTITKNRLEW, and ILSLPHFKLNKETIDGVISSNVKS. Residues 3730 to 3756 form a disordered region; the sequence is SLSHSNSNSRTKAGKDKSGTLKGCLPP. One copy of the LRR 12 repeat lies at 3875 to 3898; sequence MRGITRFCLSSSTQQELSDTMEKC. Disordered stretches follow at residues 4119–4260, 4293–4428, 4729–4756, 4794–4817, 4831–4859, 4928–4955, 4966–4985, and 5191–5212; these read ELSH…DGDK, QGII…KQET, QESLPSRQTAPTKPTESLVKKEKQLLPQ, SPLSKRKEPQWGMKERAGQKQDRT, MPSLSHHRFSPSQPKLPISSGAGKSRLAN, GVQESKKEPGVVPRKSASFPPPPFYLNC, LGKTQFSFPPLKIQDSSDSG, and QKVKSGPGVMLSKSPSRSSPLH. Composition is skewed to basic and acidic residues over residues 4121-4133, 4147-4176, 4192-4245, 4329-4361, 4375-4401, and 4415-4426; these read SHQKSSEAGEKAD, KAKDYMQQKEDDEVKISAKKDIMHPEDKGL, EPGK…EQQK, QKAKDYMQQKEEDEVKISAEKDLMHPEDKDLKG, EPGKRDGEGQEQGKEDGEGEEQGNRDG, and EQEKRDGHKSKQ. Positions 4731 to 4743 are enriched in polar residues; sequence SLPSRQTAPTKPT. Basic and acidic residues-rich tracts occupy residues 4746-4756 and 4798-4817; these read LVKKEKQLLPQ and KRKEPQWGMKERAGQKQDRT. The segment covering 5203–5212 has biased composition (polar residues); it reads KSPSRSSPLH. One copy of the LRR 13 repeat lies at 5311–5336; it reads LSQLELDKETHLGNEMLRLKRPILRR. Residues 5467–5496 form a disordered region; sequence LPDTEKTADAEARSGDVRKGKPHRSQKENR. The span at 5469–5496 shows a compositional bias: basic and acidic residues; it reads DTEKTADAEARSGDVRKGKPHRSQKENR. The LRR 14 repeat unit spans residues 5522–5545; sequence LNAKELVLNINKLEKKVHKDKDEA. Disordered stretches follow at residues 5564 to 5583 and 5763 to 5792; these read LDSGNKTDKDTPGITGSSCP and QQETSSKVSPELAGSCKFDKPKEDGQSNDR. Residues 5779-5792 show a composition bias toward basic and acidic residues; sequence KFDKPKEDGQSNDR. 5 LRR repeats span residues 5901–5924, 6259–6282, 6419–6442, 6552–6575, and 6613–6637; these read KQALLISEQEEGVLEFLPKSLFPP, PDLRIIEQEEKILKRILTPTECPS, HLESKALEIQLNLIPEMARKSLQM, HFSVKTLEIQMKAFPRIVRESYAM, and QIDLDLQYKYLRFLLGLPVGSTFPK. Disordered regions lie at residues 6859–6878 and 6916–6950; these read CKSHKSRKYRSSSKMKSPDW and APLTESNIKSHLAKNQGKSHRHPESQERKKARSDL. Over residues 6860–6871 the composition is skewed to basic residues; the sequence is KSHKSRKYRSSS. The segment covering 6937 to 6950 has biased composition (basic and acidic residues); it reads HPESQERKKARSDL. One copy of the LRR 20 repeat lies at 7012–7036; it reads NRPFFFACVPADSLEVIPKTIRWTI.

It localises to the membrane. The chain is Leucine-rich repeat transmembrane protein CCDC168 from Homo sapiens (Human).